The sequence spans 360 residues: Heme A synthase (360 aa).

8 consecutive transmembrane segments (helical) span residues Trp-29–Leu-49, Phe-111–Gly-131, Leu-139–Val-159, Leu-175–Gly-195, Leu-210–Ala-230, Val-269–Leu-289, Ala-309–Val-329, and Pro-330–Ala-350. Residue His-276 participates in heme binding. His-337 is a binding site for heme.

The protein belongs to the COX15/CtaA family. Type 2 subfamily. In terms of assembly, interacts with CtaB. Heme b is required as a cofactor.

The protein localises to the cell membrane. The enzyme catalyses Fe(II)-heme o + 2 A + H2O = Fe(II)-heme a + 2 AH2. It functions in the pathway porphyrin-containing compound metabolism; heme A biosynthesis; heme A from heme O: step 1/1. Its function is as follows. Catalyzes the conversion of heme O to heme A by two successive hydroxylations of the methyl group at C8. The first hydroxylation forms heme I, the second hydroxylation results in an unstable dihydroxymethyl group, which spontaneously dehydrates, resulting in the formyl group of heme A. The chain is Heme A synthase from Methylobacterium sp. (strain 4-46).